A 414-amino-acid polypeptide reads, in one-letter code: Glycogen synthase (414 aa).

It belongs to the glycosyltransferase group 1 family.

The catalysed reaction is [(1-&gt;4)-alpha-D-glucosyl](n) + UDP-alpha-D-glucose = [(1-&gt;4)-alpha-D-glucosyl](n+1) + UDP + H(+). It participates in glycan biosynthesis; glycogen biosynthesis. Glucosyltransferase that uses UDP-glucose as the sugar donor to elongate alpha-(1-&gt;4)-glucans. Is involved in the biosynthesis of both 6-O-methylglucosyl lipopolysaccharides (MGLP) and glycogen. May also use ADP-glucose as substrate. The chain is Glycogen synthase from Mycobacterium tuberculosis (strain CDC 1551 / Oshkosh).